An 806-amino-acid chain; its full sequence is Lon protease 1 (806 aa).

In terms of domain architecture, Lon N-terminal spans Val31–Leu235. Gly389–Thr396 contacts ATP. Residues Ala626–Phe806 enclose the Lon proteolytic domain. Residues Ser714 and Lys757 contribute to the active site.

The protein belongs to the peptidase S16 family. Homohexamer. Organized in a ring with a central cavity.

It is found in the cytoplasm. It catalyses the reaction Hydrolysis of proteins in presence of ATP.. In terms of biological role, ATP-dependent serine protease that mediates the selective degradation of mutant and abnormal proteins as well as certain short-lived regulatory proteins. Required for cellular homeostasis and for survival from DNA damage and developmental changes induced by stress. Degrades polypeptides processively to yield small peptide fragments that are 5 to 10 amino acids long. Binds to DNA in a double-stranded, site-specific manner. The chain is Lon protease 1 from Borreliella burgdorferi (strain ATCC 35210 / DSM 4680 / CIP 102532 / B31) (Borrelia burgdorferi).